The primary structure comprises 260 residues: Histidinol-phosphatase (260 aa).

Positions 67, 83, 85, and 86 each coordinate Mg(2+). Position 67 (E67) interacts with substrate. Residues 85 to 88 (IDGT), R185, and D213 each bind substrate. D213 is a Mg(2+) binding site.

The protein belongs to the inositol monophosphatase superfamily. Mg(2+) serves as cofactor.

It carries out the reaction L-histidinol phosphate + H2O = L-histidinol + phosphate. It functions in the pathway amino-acid biosynthesis; L-histidine biosynthesis; L-histidine from 5-phospho-alpha-D-ribose 1-diphosphate: step 8/9. Catalyzes the dephosphorylation of histidinol-phosphate to histidinol, the direct precursor of histidine. The polypeptide is Histidinol-phosphatase (hisN) (Mycobacterium tuberculosis (strain ATCC 25618 / H37Rv)).